The following is a 355-amino-acid chain: S-adenosylmethionine:tRNA ribosyltransferase-isomerase (355 aa).

This sequence belongs to the QueA family. As to quaternary structure, monomer.

It localises to the cytoplasm. The catalysed reaction is 7-aminomethyl-7-carbaguanosine(34) in tRNA + S-adenosyl-L-methionine = epoxyqueuosine(34) in tRNA + adenine + L-methionine + 2 H(+). It functions in the pathway tRNA modification; tRNA-queuosine biosynthesis. Transfers and isomerizes the ribose moiety from AdoMet to the 7-aminomethyl group of 7-deazaguanine (preQ1-tRNA) to give epoxyqueuosine (oQ-tRNA). The chain is S-adenosylmethionine:tRNA ribosyltransferase-isomerase from Burkholderia lata (strain ATCC 17760 / DSM 23089 / LMG 22485 / NCIMB 9086 / R18194 / 383).